Reading from the N-terminus, the 265-residue chain is Mlc titration factor A (265 aa).

Zn(2+) is bound by residues histidine 111, histidine 148, histidine 152, and glutamate 211.

It belongs to the MtfA family. In terms of assembly, monomer in solution. Interacts with Mlc. It depends on Zn(2+) as a cofactor.

It is found in the cytoplasm. With respect to regulation, association between Mlc and MtfA may induce structural changes that activate the peptidase activity of MtfA while inactivating the DNA-binding ability of Mlc. The aminopeptidase activity is partially inhibited by metal chelators such as EDTA and phenantroline, but not by inhibitors for serine-, aspartyl-, or cysteine-proteases. Functionally, involved in the modulation of the activity of the glucose-phosphotransferase system (glucose-PTS). Interacts with the transcriptional repressor Mlc, preventing its interaction with DNA and leading to the modulation of expression of genes regulated by Mlc, including ptsG, which encodes the PTS system glucose-specific EIICB component. Shows zinc-dependent metallopeptidase activity. In vitro, can cleave several artificial substrates. The highest activity is observed for L-alanine fused to 4-nitroanilide (L-alanine-pNA). Shows lower activity towards proline-pNA and valine-pNA. The polypeptide is Mlc titration factor A (Klebsiella pneumoniae subsp. pneumoniae (strain ATCC 700721 / MGH 78578)).